The primary structure comprises 494 residues: MPTESGSWAAARQTKQKRKSHSLSIKRTNSSEQDRPGLQREMLEGQDSKLPSSVRNTLLELFGQIEREFENLYLENLELRREIDTLNDRLAVEGQAIDGAELSKGQMKTKASHSTSQLSQKLKTTYKASTSKIVSSFKTTTSRAICQLVKDYVGHRDGLWDVSVTRTQPVVLGTASADHTALLWSIETGKCLIKYVGHAGSVNSIKFHPTEQIALTASGDQTAHIWRYMVQLPTPQPTADTSISGEEEVDFSDKDENDGDGDASSDCPTVRVPLTALKSHQGVVIAADWLVGGKQAVTASWDRTANLYDVETSELVHSLTGHDQELTHCCTHPTQRLVVTSSRDTTFRLWDFRDPSIHSVNVFQGHTDTVTSAVFTVGDNVVSGSDDRTVKVWDLKNMRSPIATIRTDSAINRISVSVGQRIIALPHDNRQVRLFDMSGVRLARLPRSNRQGHRRMVCCCAWSEDHPTCNLFTCGFDRQAIGWNINIPALLQEK.

Residues Met1–Leu38 are disordered. A compositionally biased stretch (polar residues) spans Ser22 to Ser31. WD repeat units lie at residues Gly154–Lys194 and Gly197–Gln236. The tract at residues Gln236–Asp266 is disordered. The segment covering Gly245–Ala263 has biased composition (acidic residues). WD repeat units lie at residues Ser279–Ser318, Gly321–Val360, Gly365–Ala403, Arg406–Leu445, and Gly452–Glu493.

It is found in the cytoplasm. It localises to the nucleus. This Xenopus tropicalis (Western clawed frog) protein is WD repeat-containing protein 37 (wdr37).